An 82-amino-acid chain; its full sequence is Large ribosomal subunit protein uL24c (82 aa).

Belongs to the universal ribosomal protein uL24 family. In terms of assembly, part of the 50S ribosomal subunit.

Its subcellular location is the plastid. It is found in the chloroplast. Its function is as follows. One of two assembly initiator proteins, it binds directly to the 5'-end of the 23S rRNA, where it nucleates assembly of the 50S subunit. In Phaeodactylum tricornutum (strain CCAP 1055/1), this protein is Large ribosomal subunit protein uL24c (rpl24).